The primary structure comprises 68 residues: Adipokinetic prohormone type 1 (68 aa).

Positions 1–20 (MNYVSIFVLIVACLCVLADA) are cleaved as a signal peptide. At Q21 the chain carries Pyrrolidone carboxylic acid. Residue G30 is modified to Glycine amide. Positions 34-68 (GAVAATMSCRSEETIAAIYKLIQNEAERLLLCQKP) are excised as a propeptide.

As to expression, expressed in antennal lobe (AL), corpora cardiaca (CC), corpora allata (CA) and gnathal ganglion (GNG) (at protein level). Expression in CC and CA detected in all animals, expression in GNG in some animals and in AL in few animals (at protein level).

It is found in the secreted. This hormone, released from cells in the corpora cardiaca, causes release of diglycerides from the fat body and stimulation of muscles to use these diglycerides as an energy source during energy-demanding processes. The sequence is that of Adipokinetic prohormone type 1 from Agrotis ipsilon (Black cutworm moth).